The sequence spans 551 residues: RCC1 and BTB domain-containing protein 2 (551 aa).

RCC1 repeat units follow at residues N64 to T115, E117 to S169, G171 to D222, T223 to D274, G276 to T326, and G328 to E382. Positions A394–P457 constitute a BTB domain.

The protein resides in the cytoplasmic vesicle. It localises to the secretory vesicle. It is found in the acrosome. This chain is RCC1 and BTB domain-containing protein 2 (RCBTB2), found in Homo sapiens (Human).